A 210-amino-acid chain; its full sequence is 7-carboxy-7-deazaguanine synthase (210 aa).

Substrate-binding positions include 12–14 and Arg27; that span reads LQG. The region spanning 18–210 is the Radical SAM core domain; that stretch reads HAGRASVFCR…VQTHKSLGIR (193 aa). [4Fe-4S] cluster contacts are provided by Cys31, Cys46, and Cys49. Thr51 contacts Mg(2+). Thr90 lines the substrate pocket. S-adenosyl-L-methionine contacts are provided by residues Gly92, 133–135, and 173–176; these read SPK and QPMD.

It belongs to the radical SAM superfamily. 7-carboxy-7-deazaguanine synthase family. As to quaternary structure, homodimer. The cofactor is [4Fe-4S] cluster. S-adenosyl-L-methionine serves as cofactor. Requires Mg(2+) as cofactor.

The enzyme catalyses 6-carboxy-5,6,7,8-tetrahydropterin + H(+) = 7-carboxy-7-deazaguanine + NH4(+). The protein operates within purine metabolism; 7-cyano-7-deazaguanine biosynthesis. Its function is as follows. Catalyzes the complex heterocyclic radical-mediated conversion of 6-carboxy-5,6,7,8-tetrahydropterin (CPH4) to 7-carboxy-7-deazaguanine (CDG), a step common to the biosynthetic pathways of all 7-deazapurine-containing compounds. The sequence is that of 7-carboxy-7-deazaguanine synthase from Bradyrhizobium diazoefficiens (strain JCM 10833 / BCRC 13528 / IAM 13628 / NBRC 14792 / USDA 110).